The sequence spans 139 residues: Large ribosomal subunit protein uL16 (139 aa).

The protein belongs to the universal ribosomal protein uL16 family. Part of the 50S ribosomal subunit.

Binds 23S rRNA and is also seen to make contacts with the A and possibly P site tRNAs. The polypeptide is Large ribosomal subunit protein uL16 (Synechocystis sp. (strain ATCC 27184 / PCC 6803 / Kazusa)).